The chain runs to 345 residues: Short-wave-sensitive opsin 1 (345 aa).

Residues 1–30 (MSEEEFYLFKNISSVGPWDGPQYHIAPVWA) are Extracellular-facing. An N-linked (GlcNAc...) asparagine glycan is attached at Asn11. A helical membrane pass occupies residues 31–55 (FYLQAAFMGTVFLIGFPLNAMVLVA). Residues 56–67 (TLRYKKLRQPLN) lie on the Cytoplasmic side of the membrane. Residues 68–93 (YILVNVSFGGFLLCIFSVFPVFVASC) traverse the membrane as a helical segment. The Extracellular portion of the chain corresponds to 94–107 (NGYFVFGRHVCALE). A disulfide bond links Cys104 and Cys181. Residues 108 to 127 (GFLGTVAGLVTGWSLAFLAF) traverse the membrane as a helical segment. The Cytoplasmic segment spans residues 128 to 146 (ERYIVICKPFGNFRFSSKH). A helical membrane pass occupies residues 147 to 170 (ALTVVLATWTIGIGVSIPPFFGWS). The Extracellular portion of the chain corresponds to 171 to 196 (RFIPEGLQCSCGPDWYTVGTKYRSES). The helical transmembrane segment at 197-224 (YTWFLFIFCFIVPLSLICFSYTQLLRAL) threads the bilayer. Over 225 to 246 (KAVAAQQQESATTQKAEREVSR) the chain is Cytoplasmic. Residues 247-270 (MVVVMVGSFCVCYVPYAAFAMYMV) form a helical membrane-spanning segment. The Extracellular segment spans residues 271–278 (NNRNHGLD). Residues 279–303 (LRLVTIPSFFSKSACIYNPIIYCFM) form a helical membrane-spanning segment. Lys290 is modified (N6-(retinylidene)lysine). Residues 304–345 (NKQFQACIMKMVCGKAMTDESDTCSSQKTEVSTVSSTQVGPN) are Cytoplasmic-facing.

This sequence belongs to the G-protein coupled receptor 1 family. Opsin subfamily. Post-translationally, phosphorylated on some or all of the serine and threonine residues present in the C-terminal region. In terms of tissue distribution, the three color pigments are found in the cone photoreceptor cells. Expressed throughout the epidermis and dermis, primarily in the stratum granulosum in the facial and abdominal skin (at protein level). Expressed in dermal fibroblasts (at protein level). Expressed in melanocytes (at protein level).

The protein resides in the cell membrane. The protein localises to the photoreceptor inner segment. Its subcellular location is the cell projection. It localises to the cilium. It is found in the photoreceptor outer segment. The protein resides in the cytoplasm. The protein localises to the perinuclear region. Visual pigments are the light-absorbing molecules that mediate vision. They consist of an apoprotein, opsin, covalently linked to cis-retinal. Required for the maintenance of cone outer segment organization in the ventral retina, but not essential for the maintenance of functioning cone photoreceptors. Involved in ensuring correct abundance and localization of retinal membrane proteins. May increase spectral sensitivity in dim light. The polypeptide is Short-wave-sensitive opsin 1 (OPN1SW) (Homo sapiens (Human)).